The following is a 645-amino-acid chain: Homeobox protein B-H2 (645 aa).

6 disordered regions span residues Met1–Thr50, Ser86–Leu134, Arg149–Pro176, Ser240–Arg259, Met265–Thr385, and Gly553–Val645. Residues Ser18 to Ala29 are compositionally biased toward low complexity. Basic residues predominate over residues Gln106–Gln121. The span at Gln122–Leu134 shows a compositional bias: low complexity. The segment covering Arg149 to Ser165 has biased composition (basic and acidic residues). The segment covering His244–His253 has biased composition (basic residues). Residues Asn275 to Gly316 show a composition bias toward low complexity. A compositionally biased stretch (gly residues) spans Ser317–Gly328. The span at Ser329 to Ile339 shows a compositional bias: polar residues. A compositionally biased stretch (low complexity) spans Ser362–Ser377. The homeobox DNA-binding region spans Gln380–Thr439. The segment covering Gly553 to Ala574 has biased composition (low complexity). Residues Thr583–Ile592 show a composition bias toward polar residues. Thr593 carries the post-translational modification Phosphothreonine. Residues Pro594–Pro603 are compositionally biased toward pro residues. Phosphoserine occurs at positions 595 and 602. The span at Asp618 to Glu632 shows a compositional bias: basic and acidic residues. Positions Arg633–Val645 are enriched in acidic residues.

This sequence belongs to the Antp homeobox family. As to expression, B-H1 and B-H2 are abundant in the eye-antenna imaginal disk. Expressed in R1 and R6 cells throughout larval stage until 30 hours after puparium formation, at which time expression is seen in the anterior and posterior primary pigment cells. Coexpressed in embryonic glial cells, neurons of the CNS and PNS, most latitudinal anterior cells of the developing notum and the central circular region of the leg and antennal imaginal disk throughout larval development.

The protein resides in the nucleus. In terms of biological role, B-H1 and B-H2 are regulated by members of the wg signaling pathway; wg and dpp. B-H1 and B-H2 are coexpressed and functionally required in R1 and R6 receptor cells and primary pigment cells for normal eye development. Coexpression is also required for the fate determination of external sensory organs, formation of notal microchaetae, formation of presutural macrochaetae, antennal development and for distal leg morphogenesis; segmentation and specification of tarsal segments 3-5. This Drosophila melanogaster (Fruit fly) protein is Homeobox protein B-H2 (B-H2).